The sequence spans 92 residues: C-C motif chemokine 4 (92 aa).

Positions 1–23 (MKLCVSAFSLLLLVAAFCDSVLS) are cleaved as a signal peptide. 2 disulfides stabilise this stretch: cysteine 34/cysteine 58 and cysteine 35/cysteine 74.

It belongs to the intercrine beta (chemokine CC) family. In terms of assembly, homodimer.

Its subcellular location is the secreted. In terms of biological role, monokine with inflammatory and chemokinetic properties. This is C-C motif chemokine 4 (Ccl4) from Rattus norvegicus (Rat).